A 116-amino-acid polypeptide reads, in one-letter code: Large ribosomal subunit protein bL17 (116 aa).

The protein belongs to the bacterial ribosomal protein bL17 family. Part of the 50S ribosomal subunit. Contacts protein L32.

This chain is Large ribosomal subunit protein bL17, found in Prochlorococcus marinus subsp. pastoris (strain CCMP1986 / NIES-2087 / MED4).